A 346-amino-acid polypeptide reads, in one-letter code: UPF0283 membrane protein VP1870 (346 aa).

Residues 1–30 (MSELKQKQIFSEKALEKEQQSDSPELTAQK) are disordered. A compositionally biased stretch (polar residues) spans 21 to 30 (SDSPELTAQK). The next 2 membrane-spanning stretches (helical) occupy residues 73-93 (VFAT…VTAV) and 98-118 (WLAL…LGAI).

Belongs to the UPF0283 family.

The protein localises to the cell inner membrane. The chain is UPF0283 membrane protein VP1870 from Vibrio parahaemolyticus serotype O3:K6 (strain RIMD 2210633).